The following is a 22-amino-acid chain: Unknown protein 10 (22 aa).

This is Unknown protein 10 from Pseudotsuga menziesii (Douglas-fir).